A 240-amino-acid chain; its full sequence is Biosynthetic peptidoglycan transglycosylase (240 aa).

The helical transmembrane segment at 15–35 threads the bilayer; it reads WMVYLGAVVAIAWLATQAFYF.

Belongs to the glycosyltransferase 51 family.

Its subcellular location is the cell inner membrane. The enzyme catalyses [GlcNAc-(1-&gt;4)-Mur2Ac(oyl-L-Ala-gamma-D-Glu-L-Lys-D-Ala-D-Ala)](n)-di-trans,octa-cis-undecaprenyl diphosphate + beta-D-GlcNAc-(1-&gt;4)-Mur2Ac(oyl-L-Ala-gamma-D-Glu-L-Lys-D-Ala-D-Ala)-di-trans,octa-cis-undecaprenyl diphosphate = [GlcNAc-(1-&gt;4)-Mur2Ac(oyl-L-Ala-gamma-D-Glu-L-Lys-D-Ala-D-Ala)](n+1)-di-trans,octa-cis-undecaprenyl diphosphate + di-trans,octa-cis-undecaprenyl diphosphate + H(+). The protein operates within cell wall biogenesis; peptidoglycan biosynthesis. In terms of biological role, peptidoglycan polymerase that catalyzes glycan chain elongation from lipid-linked precursors. This chain is Biosynthetic peptidoglycan transglycosylase, found in Paraburkholderia phytofirmans (strain DSM 17436 / LMG 22146 / PsJN) (Burkholderia phytofirmans).